Reading from the N-terminus, the 21-residue chain is Fibrinogen beta chain (21 aa).

Gln1 is subject to Pyrrolidone carboxylic acid. Over residues 1–10 (QFPTDYDEGQ) the composition is skewed to acidic residues. The segment at 1–21 (QFPTDYDEGQDDRPKLGLGAR) is disordered. Thr4 carries O-linked (GalNAc...) threonine glycosylation. Tyr6 carries the sulfotyrosine modification.

As to quaternary structure, heterohexamer; disulfide linked. Contains 2 sets of 3 non-identical chains (alpha, beta and gamma). The 2 heterotrimers are in head to head conformation with the N-termini in a small central domain. Post-translationally, conversion of fibrinogen to fibrin is triggered by thrombin, which cleaves fibrinopeptides A and B from alpha and beta chains, and thus exposes the N-terminal polymerization sites responsible for the formation of the soft clot.

It localises to the secreted. In terms of biological role, cleaved by the protease thrombin to yield monomers which, together with fibrinogen alpha (FGA) and fibrinogen gamma (FGG), polymerize to form an insoluble fibrin matrix. Fibrin has a major function in hemostasis as one of the primary components of blood clots. In addition, functions during the early stages of wound repair to stabilize the lesion and guide cell migration during re-epithelialization. Was originally thought to be essential for platelet aggregation, based on in vitro studies using anticoagulated blood. However subsequent studies have shown that it is not absolutely required for thrombus formation in vivo. Enhances expression of SELP in activated platelets. Maternal fibrinogen is essential for successful pregnancy. Fibrin deposition is also associated with infection, where it protects against IFNG-mediated hemorrhage. May also facilitate the antibacterial immune response via both innate and T-cell mediated pathways. This is Fibrinogen beta chain (FGB) from Bubalus bubalis (Domestic water buffalo).